The primary structure comprises 122 residues: Large ribosomal subunit protein uL14 (122 aa).

It belongs to the universal ribosomal protein uL14 family. In terms of assembly, part of the 50S ribosomal subunit. Forms a cluster with proteins L3 and L19. In the 70S ribosome, L14 and L19 interact and together make contacts with the 16S rRNA in bridges B5 and B8.

Its function is as follows. Binds to 23S rRNA. Forms part of two intersubunit bridges in the 70S ribosome. In Streptomyces avermitilis (strain ATCC 31267 / DSM 46492 / JCM 5070 / NBRC 14893 / NCIMB 12804 / NRRL 8165 / MA-4680), this protein is Large ribosomal subunit protein uL14.